An 87-amino-acid polypeptide reads, in one-letter code: Venom serine protease inhibitor (87 aa).

A signal peptide spans 1–23 (MPRLVLVSFLFLAIFSVFIGGFA). Cystine bridges form between Cys27–Cys61, Cys36–Cys57, Cys40–Cys53, Cys44–Cys81, and Cys63–Cys75. One can recognise a TIL domain in the interval 27-81 (CPRNEIFTRCHAACQPSCARLARKPFCIKICKPGCICTSGYLRNKNNVCVPRSRC).

Belongs to the serine protease inhibitor-like (TIL domain-containing) family. In terms of tissue distribution, specifically expressed by the venom gland.

Its subcellular location is the secreted. Its function is as follows. Antifibrinolytic and antimicrobial serine protease inhibitor. Inhibits trypsin, plasmin and microbial serine proteases but not chymotrypsin, thrombin and elastase. Inhibits the plasmin-mediated degradation of fibrin to fibrin degradation products. Also binds to bacterial and fungal surfaces and exhibits antimicrobial activity against fungi as well as Gram-positive and Gram-negative bacteria. The sequence is that of Venom serine protease inhibitor from Apis cerana (Indian honeybee).